A 117-amino-acid chain; its full sequence is Large ribosomal subunit protein bL20 (117 aa).

This sequence belongs to the bacterial ribosomal protein bL20 family.

Its function is as follows. Binds directly to 23S ribosomal RNA and is necessary for the in vitro assembly process of the 50S ribosomal subunit. It is not involved in the protein synthesizing functions of that subunit. The polypeptide is Large ribosomal subunit protein bL20 (Mesomycoplasma hyopneumoniae (strain 232) (Mycoplasma hyopneumoniae)).